Reading from the N-terminus, the 183-residue chain is Threonylcarbamoyl-AMP synthase (183 aa).

The 183-residue stretch at 1 to 183 (MNIQQIVEQL…LFTHQLFRQG (183 aa)) folds into the YrdC-like domain.

Belongs to the SUA5 family. TsaC subfamily.

Its subcellular location is the cytoplasm. It catalyses the reaction L-threonine + hydrogencarbonate + ATP = L-threonylcarbamoyladenylate + diphosphate + H2O. Functionally, required for the formation of a threonylcarbamoyl group on adenosine at position 37 (t(6)A37) in tRNAs that read codons beginning with adenine. Catalyzes the conversion of L-threonine, HCO(3)(-)/CO(2) and ATP to give threonylcarbamoyl-AMP (TC-AMP) as the acyladenylate intermediate, with the release of diphosphate. This Pasteurella multocida (strain Pm70) protein is Threonylcarbamoyl-AMP synthase.